Here is a 1032-residue protein sequence, read N- to C-terminus: Probable ATP-dependent RNA helicase DDX46 (1032 aa).

Residues 1 to 24 (MGRESRHYRKRSASRGRSGSRSRS) are compositionally biased toward basic residues. Positions 1–228 (MGRESRHYRK…EMEGEELDPL (228 aa)) are disordered. Gly2 carries the N-myristoyl glycine lipid modification. A compositionally biased stretch (basic and acidic residues) spans 26-49 (SPSDKRSKRGDDRRSRSRDRDRRR). 2 stretches are compositionally biased toward basic residues: residues 50–73 (ERSR…RSRS) and 81–103 (ERRR…RRSR). Over residues 112-200 (KKTENRSRSK…EMKQGKKWSL (89 aa)) the composition is skewed to basic and acidic residues. Positions 152–197 (DQNKLEEEMRKRKERVEKWREEQRKKAMENIGELKKEIEEMKQGKK) form a coiled coil. Lys186 is covalently cross-linked (Glycyl lysine isopeptide (Lys-Gly) (interchain with G-Cter in SUMO2)). A Phosphoserine modification is found at Ser199. 2 stretches are compositionally biased toward acidic residues: residues 201 to 211 (EDDDDDEDDPA) and 219 to 228 (EMEGEELDPL). Lys263 carries the post-translational modification N6-acetyllysine. Residue Tyr294 is modified to Phosphotyrosine. 2 positions are modified to phosphoserine: Ser295 and Ser296. Lys325 is covalently cross-linked (Glycyl lysine isopeptide (Lys-Gly) (interchain with G-Cter in SUMO2)). The residue at position 346 (Ser346) is a Phosphoserine. Residues 372–400 (KSWVQCGISMKILNSLKKHGYEKPTPIQT) carry the Q motif motif. The Helicase ATP-binding domain maps to 403 to 581 (IPAIMSGRDL…RRILSKPIEV (179 aa)). 416–423 (AKTGSGKT) provides a ligand contact to ATP. A DEAD box motif is present at residues 529–532 (DEAD). Positions 592–753 (DVEQQVIVIE…AVPPDLEKLW (162 aa)) constitute a Helicase C-terminal domain. Lys776 carries the post-translational modification N6-acetyllysine. Lys779 is covalently cross-linked (Glycyl lysine isopeptide (Lys-Gly) (interchain with G-Cter in SUMO2)). At Ser804 the chain carries Phosphoserine. Lys904 carries the N6-acetyllysine modification. Glycyl lysine isopeptide (Lys-Gly) (interchain with G-Cter in SUMO2) cross-links involve residues Lys908 and Lys916. Ser929 carries the post-translational modification Phosphoserine.

This sequence belongs to the DEAD box helicase family. DDX46/PRP5 subfamily. As to quaternary structure, component of the 17S U2 SnRNP complex, a ribonucleoprotein complex that contains small nuclear RNA (snRNA) U2 and a number of specific proteins. Within the 17S U2 SnRNP complex, DDX46 is part of the SF3B subcomplex, which is required for 'A' complex assembly formed by the stable binding of U2 snRNP to the branchpoint sequence in pre-mRNA. Recruited to the 17S U2 SnRNP complex following release of DDX42; DDX42 and DDX46 bind the SF3B subcomplex in a competitive manner.

The protein localises to the nucleus speckle. It is found in the nucleus. It localises to the cajal body. It carries out the reaction ATP + H2O = ADP + phosphate + H(+). Its function is as follows. Component of the 17S U2 SnRNP complex of the spliceosome, a large ribonucleoprotein complex that removes introns from transcribed pre-mRNAs. The 17S U2 SnRNP complex (1) directly participates in early spliceosome assembly and (2) mediates recognition of the intron branch site during pre-mRNA splicing by promoting the selection of the pre-mRNA branch-site adenosine, the nucleophile for the first step of splicing. Within the 17S U2 SnRNP complex, DDX46 plays essential roles during assembly of pre-spliceosome and proofreading of the branch site. This Pongo abelii (Sumatran orangutan) protein is Probable ATP-dependent RNA helicase DDX46 (DDX46).